The following is a 238-amino-acid chain: Doublecortin domain-containing protein (238 aa).

Positions 82-112 (VFERLNDKQFYTGVQKTKFMELLKNNKNKSS) are partial p25alpha domain. Residues 151–232 (KTIFLFNNEK…GDPPAPIRNL (82 aa)) enclose the Doublecortin domain.

In terms of assembly, interacts with alpha-tubulin 1 and beta-tubulin; the interaction stabilizes microtubule assembly.

It is found in the cytoplasm. It localises to the cytoskeleton. Its function is as follows. Involved in the stabilization of microtubules. Probably by controlling microtubules stabilization, plays a role in invasion, microneme secretion and parasite growth in host erythrocytes. This is Doublecortin domain-containing protein from Plasmodium falciparum (isolate 3D7).